Consider the following 305-residue polypeptide: Superkiller complex protein 8 (305 aa).

WD repeat units lie at residues 14–57, 62–101, 104–143, 146–187, 188–227, 230–269, and 272–305; these read AHED…LEMQ, GHQL…QIRS, AGPV…KEYS, TRGK…HTLE, GHAM…LAAT, GHGS…CVHT, and DHQD…DCPI.

This sequence belongs to the SKI8 family. As to quaternary structure, component of the PAF1 complex. Component of the SKI complex.

It localises to the nucleus. The protein resides in the cytoplasm. In terms of biological role, component of the PAF1 complex (PAF1C) which has multiple functions during transcription by RNA polymerase II and is implicated in regulation of development and maintenance of embryonic stem cell pluripotency. PAF1C associates with RNA polymerase II through interaction with POLR2A CTD non-phosphorylated and 'Ser-2'- and 'Ser-5'-phosphorylated forms and is involved in transcriptional elongation, acting both independently and synergistically with TCEA1 and in cooperation with the DSIF complex and HTATSF1. Also acts as a component of the SKI complex, a multiprotein complex that assists the RNA-degrading exosome during the mRNA decay and quality-control pathways. The SKI complex catalyzes mRNA extraction from 80S ribosomal complexes in the 3'-5' direction and channels mRNA to the cytosolic exosome for degradation. The protein is Superkiller complex protein 8 (skic8) of Xenopus laevis (African clawed frog).